Consider the following 73-residue polypeptide: Translational regulator CsrA (73 aa).

The protein belongs to the CsrA/RsmA family. Homodimer; the beta-strands of each monomer intercalate to form a hydrophobic core, while the alpha-helices form wings that extend away from the core.

It localises to the cytoplasm. Functionally, a translational regulator that binds mRNA to regulate translation initiation and/or mRNA stability. Usually binds in the 5'-UTR at or near the Shine-Dalgarno sequence preventing ribosome-binding, thus repressing translation. Its main target seems to be the major flagellin gene, while its function is anatagonized by FliW. In Thermosipho africanus (strain TCF52B), this protein is Translational regulator CsrA.